The primary structure comprises 286 residues: 33 kDa chaperonin (286 aa).

2 cysteine pairs are disulfide-bonded: Cys-225-Cys-227 and Cys-258-Cys-261.

Belongs to the HSP33 family. In terms of processing, under oxidizing conditions two disulfide bonds are formed involving the reactive cysteines. Under reducing conditions zinc is bound to the reactive cysteines and the protein is inactive.

It is found in the cytoplasm. In terms of biological role, redox regulated molecular chaperone. Protects both thermally unfolding and oxidatively damaged proteins from irreversible aggregation. Plays an important role in the bacterial defense system toward oxidative stress. The chain is 33 kDa chaperonin from Shewanella sp. (strain MR-4).